Reading from the N-terminus, the 273-residue chain is 1,4-dihydroxy-2-naphthoyl-CoA synthase (273 aa).

Substrate-binding positions include Arg-34, 73 to 77 (SGGDQ), Tyr-85, 117 to 121 (YAVGG), Thr-143, Ser-149, Tyr-246, and Lys-261. 142–144 (QTG) contributes to the hydrogencarbonate binding site. A compositionally biased stretch (basic and acidic residues) spans 254–265 (GRDAFKEKRDPD). Positions 254-273 (GRDAFKEKRDPDFDQFPKFP) are disordered.

The protein belongs to the enoyl-CoA hydratase/isomerase family. MenB subfamily. The cofactor is hydrogencarbonate.

It carries out the reaction 2-succinylbenzoyl-CoA + H(+) = 1,4-dihydroxy-2-naphthoyl-CoA + H2O. The protein operates within quinol/quinone metabolism; 1,4-dihydroxy-2-naphthoate biosynthesis; 1,4-dihydroxy-2-naphthoate from chorismate: step 6/7. Its pathway is quinol/quinone metabolism; menaquinone biosynthesis. Functionally, converts o-succinylbenzoyl-CoA (OSB-CoA) to 1,4-dihydroxy-2-naphthoyl-CoA (DHNA-CoA). The sequence is that of 1,4-dihydroxy-2-naphthoyl-CoA synthase from Staphylococcus aureus (strain MRSA252).